The chain runs to 296 residues: N-acetylmuramic acid 6-phosphate etherase (296 aa).

Residues 54–217 (VTESFRKGGR…STTSMVGIGK (164 aa)) enclose the SIS domain. Glu-82 (proton donor) is an active-site residue. Residue Glu-113 is part of the active site.

The protein belongs to the GCKR-like family. MurNAc-6-P etherase subfamily. As to quaternary structure, homodimer.

The catalysed reaction is N-acetyl-D-muramate 6-phosphate + H2O = N-acetyl-D-glucosamine 6-phosphate + (R)-lactate. The protein operates within amino-sugar metabolism; N-acetylmuramate degradation. Its function is as follows. Specifically catalyzes the cleavage of the D-lactyl ether substituent of MurNAc 6-phosphate, producing GlcNAc 6-phosphate and D-lactate. The protein is N-acetylmuramic acid 6-phosphate etherase of Listeria welshimeri serovar 6b (strain ATCC 35897 / DSM 20650 / CCUG 15529 / CIP 8149 / NCTC 11857 / SLCC 5334 / V8).